Here is a 305-residue protein sequence, read N- to C-terminus: Methionyl-tRNA formyltransferase (305 aa).

Residue 111–114 participates in (6S)-5,6,7,8-tetrahydrofolate binding; that stretch reads SLLP.

The protein belongs to the Fmt family.

It catalyses the reaction L-methionyl-tRNA(fMet) + (6R)-10-formyltetrahydrofolate = N-formyl-L-methionyl-tRNA(fMet) + (6S)-5,6,7,8-tetrahydrofolate + H(+). Its function is as follows. Attaches a formyl group to the free amino group of methionyl-tRNA(fMet). The formyl group appears to play a dual role in the initiator identity of N-formylmethionyl-tRNA by promoting its recognition by IF2 and preventing the misappropriation of this tRNA by the elongation apparatus. This chain is Methionyl-tRNA formyltransferase, found in Campylobacter jejuni subsp. doylei (strain ATCC BAA-1458 / RM4099 / 269.97).